The primary structure comprises 415 residues: Heterogeneous nuclear ribonucleoprotein F (415 aa).

Position 1 is an N-acetylmethionine (methionine 1). N-acetylmethionine; in Heterogeneous nuclear ribonucleoprotein F, N-terminally processed is present on methionine 2. One can recognise an RRM 1 domain in the interval 13-85; sequence VKLRGLPWSC…ESMGHRYIEV (73 aa). Lysine 72 is covalently cross-linked (Glycyl lysine isopeptide (Lys-Gly) (interchain with G-Cter in SUMO)). The segment at 81–86 is interaction with RNA; that stretch reads RYIEVF. Residue lysine 87 forms a Glycyl lysine isopeptide (Lys-Gly) (interchain with G-Cter in SUMO2) linkage. A phosphoserine mark is found at serine 104, serine 107, and serine 161. In terms of domain architecture, RRM 2 spans 111 to 188; the sequence is GFVRLRGLPF…RYIEVFKSSQ (78 aa). A Glycyl lysine isopeptide (Lys-Gly) (interchain with G-Cter in SUMO2) cross-link involves residue lysine 167. Residues 179-184 are interaction with RNA; the sequence is RYIEVF. A Glycyl lysine isopeptide (Lys-Gly) (interchain with G-Cter in SUMO2) cross-link involves residue lysine 185. Residues serine 187, serine 193, and serine 195 each carry the phosphoserine modification. N6-acetyllysine; alternate is present on lysine 200. Lysine 200 is covalently cross-linked (Glycyl lysine isopeptide (Lys-Gly) (interchain with G-Cter in SUMO2); alternate). A Phosphothreonine modification is found at threonine 215. Lysine 224 carries the N6-acetyllysine; alternate modification. A Glycyl lysine isopeptide (Lys-Gly) (interchain with G-Cter in SUMO2); alternate cross-link involves residue lysine 224. Serine 265 is modified (phosphoserine). In terms of domain architecture, RRM 3 spans 289 to 366; the sequence is HCVHMRGLPY…IELFLNSTTG (78 aa). Residues 355–360 are interaction with RNA; it reads RYIELF.

As to quaternary structure, identified in the spliceosome C complex. Interacts with AGO1, AGO2, TBP and TXNL4/DIM1. In terms of processing, sumoylated.

It is found in the nucleus. It localises to the nucleoplasm. Functionally, component of the heterogeneous nuclear ribonucleoprotein (hnRNP) complexes which provide the substrate for the processing events that pre-mRNAs undergo before becoming functional, translatable mRNAs in the cytoplasm. Plays a role in the regulation of alternative splicing events. Binds G-rich sequences in pre-mRNAs and keeps target RNA in an unfolded state. This Macaca fascicularis (Crab-eating macaque) protein is Heterogeneous nuclear ribonucleoprotein F (HNRNPF).